We begin with the raw amino-acid sequence, 170 residues long: ATP synthase subunit b (170 aa).

A helical membrane pass occupies residues 11–31; it reads AFTFGDAFFTLFAFAILLVLI.

Belongs to the ATPase B chain family. In terms of assembly, F-type ATPases have 2 components, F(1) - the catalytic core - and F(0) - the membrane proton channel. F(1) has five subunits: alpha(3), beta(3), gamma(1), delta(1), epsilon(1). F(0) has three main subunits: a(1), b(2) and c(10-14). The alpha and beta chains form an alternating ring which encloses part of the gamma chain. F(1) is attached to F(0) by a central stalk formed by the gamma and epsilon chains, while a peripheral stalk is formed by the delta and b chains.

The protein localises to the cell membrane. In terms of biological role, f(1)F(0) ATP synthase produces ATP from ADP in the presence of a proton or sodium gradient. F-type ATPases consist of two structural domains, F(1) containing the extramembraneous catalytic core and F(0) containing the membrane proton channel, linked together by a central stalk and a peripheral stalk. During catalysis, ATP synthesis in the catalytic domain of F(1) is coupled via a rotary mechanism of the central stalk subunits to proton translocation. Component of the F(0) channel, it forms part of the peripheral stalk, linking F(1) to F(0). The polypeptide is ATP synthase subunit b (Listeria monocytogenes serotype 4b (strain F2365)).